Consider the following 108-residue polypeptide: MAYQLYRNTTLGNSLQESLDELIQTQQITPQLALQVLLQFDKAINTALANRVRNRVNFKGSLNTYRFCDNVWTFVLNDVEFREVTDLVKVDKVKIVACDGKNTGNAAE.

This sequence belongs to the TFIIA subunit 2 family. As to quaternary structure, TFIIA is a heterodimer of the large unprocessed subunit 1 and a small subunit gamma. It was originally believed to be a heterotrimer of an alpha, a beta and a gamma subunit. Interacts with NCOA6 general coactivator. TFIIA forms a complex with TBP.

It is found in the nucleus. TFIIA is a component of the transcription machinery of RNA polymerase II and plays an important role in transcriptional activation. TFIIA in a complex with TBP mediates transcriptional activity. The sequence is that of Transcription initiation factor IIA subunit 2 (gtf2a2) from Oncorhynchus mykiss (Rainbow trout).